The sequence spans 145 residues: Large-conductance mechanosensitive channel (145 aa).

Transmembrane regions (helical) follow at residues 30–50 (VAVV…AWLM) and 74–94 (GELV…FLII).

This sequence belongs to the MscL family. In terms of assembly, homopentamer.

Its subcellular location is the cell inner membrane. Channel that opens in response to stretch forces in the membrane lipid bilayer. May participate in the regulation of osmotic pressure changes within the cell. The chain is Large-conductance mechanosensitive channel from Synechocystis sp. (strain ATCC 27184 / PCC 6803 / Kazusa).